Consider the following 595-residue polypeptide: Beta-(1--&gt;2)glucan export ATP-binding/permease protein NdvA (595 aa).

Residues 21 to 301 form the ABC transmembrane type-1 domain; that stretch reads SLLICAANVM…MSNFINLTVS (281 aa). 5 helical membrane passes run 22 to 42, 55 to 75, 128 to 148, 152 to 172, and 248 to 268; these read LLIC…PILF, IILT…AYVL, AIWL…FILI, FNMN…YVLI, and TAST…VAKG. Residues 335-569 enclose the ABC transporter domain; it reads VQFHHVTYKF…GGRFYKLLKA (235 aa). Residue 368–375 coordinates ATP; it reads GPTGAGKT.

The protein belongs to the ABC transporter superfamily. Beta-(1--&gt;2)glucan exporter (TC 3.A.1.108.1) family. Homodimer.

It localises to the cell inner membrane. The catalysed reaction is [(1-&gt;2)-beta-D-glucosyl](n)(in) + ATP + H2O = [(1-&gt;2)-beta-D-glucosyl](n)(out) + ADP + phosphate + H(+). Functionally, involved in beta-(1--&gt;2)glucan export. Transmembrane domains (TMD) form a pore in the inner membrane and the ATP-binding domain (NBD) is responsible for energy generation. The polypeptide is Beta-(1--&gt;2)glucan export ATP-binding/permease protein NdvA (Bartonella quintana (strain Toulouse) (Rochalimaea quintana)).